The sequence spans 342 residues: Phosphate acyltransferase (342 aa).

It belongs to the PlsX family. In terms of assembly, homodimer. Probably interacts with PlsY.

The protein localises to the cytoplasm. It catalyses the reaction a fatty acyl-[ACP] + phosphate = an acyl phosphate + holo-[ACP]. The protein operates within lipid metabolism; phospholipid metabolism. Its function is as follows. Catalyzes the reversible formation of acyl-phosphate (acyl-PO(4)) from acyl-[acyl-carrier-protein] (acyl-ACP). This enzyme utilizes acyl-ACP as fatty acyl donor, but not acyl-CoA. The sequence is that of Phosphate acyltransferase from Leuconostoc mesenteroides subsp. mesenteroides (strain ATCC 8293 / DSM 20343 / BCRC 11652 / CCM 1803 / JCM 6124 / NCDO 523 / NBRC 100496 / NCIMB 8023 / NCTC 12954 / NRRL B-1118 / 37Y).